The chain runs to 527 residues: ATP synthase subunit alpha (527 aa).

177–184 (GDRQTGKT) serves as a coordination point for ATP.

Belongs to the ATPase alpha/beta chains family. F-type ATPases have 2 components, CF(1) - the catalytic core - and CF(0) - the membrane proton channel. CF(1) has five subunits: alpha(3), beta(3), gamma(1), delta(1), epsilon(1). CF(0) has four main subunits: a(1), b(1), b'(1) and c(9-12).

The protein localises to the cell membrane. It carries out the reaction ATP + H2O + 4 H(+)(in) = ADP + phosphate + 5 H(+)(out). In terms of biological role, produces ATP from ADP in the presence of a proton gradient across the membrane. The alpha chain is a regulatory subunit. The polypeptide is ATP synthase subunit alpha (Roseiflexus sp. (strain RS-1)).